We begin with the raw amino-acid sequence, 82 residues long: ATP synthase subunit c, chloroplastic (82 aa).

2 consecutive transmembrane segments (helical) span residues 7–27 (GASVIAAGLAIGLASIGPGIG) and 57–77 (LAFMESLTIYGLVVALCLLFA).

It belongs to the ATPase C chain family. F-type ATPases have 2 components, F(1) - the catalytic core - and F(0) - the membrane proton channel. F(1) has five subunits: alpha(3), beta(3), gamma(1), delta(1), epsilon(1). F(0) has four main subunits: a(1), b(1), b'(1) and c(10-14). The alpha and beta chains form an alternating ring which encloses part of the gamma chain. F(1) is attached to F(0) by a central stalk formed by the gamma and epsilon chains, while a peripheral stalk is formed by the delta, b and b' chains.

The protein resides in the plastid. It localises to the chloroplast thylakoid membrane. In terms of biological role, f(1)F(0) ATP synthase produces ATP from ADP in the presence of a proton or sodium gradient. F-type ATPases consist of two structural domains, F(1) containing the extramembraneous catalytic core and F(0) containing the membrane proton channel, linked together by a central stalk and a peripheral stalk. During catalysis, ATP synthesis in the catalytic domain of F(1) is coupled via a rotary mechanism of the central stalk subunits to proton translocation. Its function is as follows. Key component of the F(0) channel; it plays a direct role in translocation across the membrane. A homomeric c-ring of between 10-14 subunits forms the central stalk rotor element with the F(1) delta and epsilon subunits. This Emiliania huxleyi (Coccolithophore) protein is ATP synthase subunit c, chloroplastic.